The sequence spans 50 residues: PhoP/PhoQ regulator MgrB (50 aa).

Topologically, residues 1–4 (MLDL) are cytoplasmic. A helical transmembrane segment spans residues 5–27 (NITKLVTTVVIIAACCLFYLLAL). Residues 28-50 (DSYCDQGGTFSTGICAITTIVPW) lie on the Periplasmic side of the membrane.

It belongs to the MgrB family. As to quaternary structure, probably interacts with the periplasmic domain of PhoQ.

It is found in the cell inner membrane. Its function is as follows. PhoP-regulated transcription is redox-sensitive, being activated when the periplasm becomes more reducing. MgrB acts between DsbA/DsbB and PhoP/PhoQ in this pathway. Represses PhoP/PhoQ signaling, possibly by binding to the periplasmic domain of PhoQ, altering its activity and that of downstream effector PhoP. In Yersinia pestis, this protein is PhoP/PhoQ regulator MgrB.